A 460-amino-acid polypeptide reads, in one-letter code: 3-isopropylmalate dehydratase large subunit (460 aa).

[4Fe-4S] cluster contacts are provided by cysteine 338, cysteine 398, and cysteine 401.

It belongs to the aconitase/IPM isomerase family. LeuC type 1 subfamily. In terms of assembly, heterodimer of LeuC and LeuD. Requires [4Fe-4S] cluster as cofactor.

It carries out the reaction (2R,3S)-3-isopropylmalate = (2S)-2-isopropylmalate. Its pathway is amino-acid biosynthesis; L-leucine biosynthesis; L-leucine from 3-methyl-2-oxobutanoate: step 2/4. Catalyzes the isomerization between 2-isopropylmalate and 3-isopropylmalate, via the formation of 2-isopropylmaleate. In Streptococcus gordonii (strain Challis / ATCC 35105 / BCRC 15272 / CH1 / DL1 / V288), this protein is 3-isopropylmalate dehydratase large subunit.